We begin with the raw amino-acid sequence, 322 residues long: Quinolinate synthase (322 aa).

Iminosuccinate is bound by residues His-36 and Ser-53. Residue Cys-98 participates in [4Fe-4S] cluster binding. Residues 124 to 126 (YIN) and Ser-141 each bind iminosuccinate. Cys-184 is a binding site for [4Fe-4S] cluster. Iminosuccinate-binding positions include 210-212 (HPE) and Thr-227. Cys-278 provides a ligand contact to [4Fe-4S] cluster.

This sequence belongs to the quinolinate synthase family. Type 2 subfamily. [4Fe-4S] cluster is required as a cofactor.

The protein resides in the cytoplasm. It catalyses the reaction iminosuccinate + dihydroxyacetone phosphate = quinolinate + phosphate + 2 H2O + H(+). Its pathway is cofactor biosynthesis; NAD(+) biosynthesis; quinolinate from iminoaspartate: step 1/1. Its function is as follows. Catalyzes the condensation of iminoaspartate with dihydroxyacetone phosphate to form quinolinate. In Chloroherpeton thalassium (strain ATCC 35110 / GB-78), this protein is Quinolinate synthase.